The chain runs to 184 residues: GTP cyclohydrolase 1 (184 aa).

Zn(2+)-binding residues include cysteine 75, histidine 78, and cysteine 146.

The protein belongs to the GTP cyclohydrolase I family. As to quaternary structure, toroid-shaped homodecamer, composed of two pentamers of five dimers.

The enzyme catalyses GTP + H2O = 7,8-dihydroneopterin 3'-triphosphate + formate + H(+). Its pathway is cofactor biosynthesis; 7,8-dihydroneopterin triphosphate biosynthesis; 7,8-dihydroneopterin triphosphate from GTP: step 1/1. This is GTP cyclohydrolase 1 from Chromohalobacter salexigens (strain ATCC BAA-138 / DSM 3043 / CIP 106854 / NCIMB 13768 / 1H11).